The primary structure comprises 232 residues: Phosphatidylserine decarboxylase proenzyme (232 aa).

The Schiff-base intermediate with substrate; via pyruvic acid role is filled by Ser-190. Pyruvic acid (Ser); by autocatalysis is present on Ser-190.

The protein belongs to the phosphatidylserine decarboxylase family. PSD-A subfamily. Heterodimer of a large membrane-associated beta subunit and a small pyruvoyl-containing alpha subunit. Pyruvate serves as cofactor. In terms of processing, is synthesized initially as an inactive proenzyme. Formation of the active enzyme involves a self-maturation process in which the active site pyruvoyl group is generated from an internal serine residue via an autocatalytic post-translational modification. Two non-identical subunits are generated from the proenzyme in this reaction, and the pyruvate is formed at the N-terminus of the alpha chain, which is derived from the carboxyl end of the proenzyme. The post-translation cleavage follows an unusual pathway, termed non-hydrolytic serinolysis, in which the side chain hydroxyl group of the serine supplies its oxygen atom to form the C-terminus of the beta chain, while the remainder of the serine residue undergoes an oxidative deamination to produce ammonia and the pyruvoyl prosthetic group on the alpha chain.

Its subcellular location is the cell membrane. The catalysed reaction is a 1,2-diacyl-sn-glycero-3-phospho-L-serine + H(+) = a 1,2-diacyl-sn-glycero-3-phosphoethanolamine + CO2. It participates in phospholipid metabolism; phosphatidylethanolamine biosynthesis; phosphatidylethanolamine from CDP-diacylglycerol: step 2/2. In terms of biological role, catalyzes the formation of phosphatidylethanolamine (PtdEtn) from phosphatidylserine (PtdSer). The polypeptide is Phosphatidylserine decarboxylase proenzyme (Allorhizobium ampelinum (strain ATCC BAA-846 / DSM 112012 / S4) (Agrobacterium vitis (strain S4))).